The chain runs to 407 residues: Proteasome-activating nucleotidase (407 aa).

A coiled-coil region spans residues 22 to 67 (KEKTQIAELESKVLRLELKNKDVTRENVQIKKENEILKRELDKLRI). Residues 192–197 (GTGKTL) and His331 each bind ATP. Residues 405 to 407 (MYG) form a docks into pockets in the proteasome alpha-ring to cause gate opening region.

It belongs to the AAA ATPase family. In terms of assembly, homohexamer. The hexameric complex has a two-ring architecture resembling a top hat that caps the 20S proteasome core at one or both ends. Upon ATP-binding, the C-terminus of PAN interacts with the alpha-rings of the proteasome core by binding to the intersubunit pockets.

Its subcellular location is the cytoplasm. Its function is as follows. ATPase which is responsible for recognizing, binding, unfolding and translocation of substrate proteins into the archaeal 20S proteasome core particle. Is essential for opening the gate of the 20S proteasome via an interaction with its C-terminus, thereby allowing substrate entry and access to the site of proteolysis. Thus, the C-termini of the proteasomal ATPase function like a 'key in a lock' to induce gate opening and therefore regulate proteolysis. Unfolding activity requires energy from ATP hydrolysis, whereas ATP binding alone promotes ATPase-20S proteasome association which triggers gate opening, and supports translocation of unfolded substrates. The chain is Proteasome-activating nucleotidase from Methanococcus maripaludis (strain C7 / ATCC BAA-1331).